A 261-amino-acid polypeptide reads, in one-letter code: Cytochrome c oxidase subunit 3 (261 aa).

Residues 1–15 (MTHQTHAYHMVNPSP) are Mitochondrial matrix-facing. Residues 16 to 34 (WPLTGALSALLMTSGLIMW) traverse the membrane as a helical segment. At 35–40 (FHFNST) the chain is on the mitochondrial intermembrane side. A helical membrane pass occupies residues 41 to 66 (TLLMLGLTTNMLTMYQWWRDVVREST). The Mitochondrial matrix portion of the chain corresponds to 67 to 72 (FQGHHT). Residues 73–105 (PNVQKGLRYGMILFIISEVLFFTGFFWAFYHSS) traverse the membrane as a helical segment. Over 106–128 (LAPTPELGGCWPPTGIHPLNPLE) the chain is Mitochondrial intermembrane. The chain crosses the membrane as a helical span at residues 129–152 (VPLLNTSVLLASGVSITWAHHSLM). Over 153–155 (EGN) the chain is Mitochondrial matrix. The chain crosses the membrane as a helical span at residues 156 to 183 (RNHMLQALFITIALGVYFTLLQASEYYE). The Mitochondrial intermembrane segment spans residues 184 to 190 (APFTISD). The helical transmembrane segment at 191–223 (GVYGSTFFVATGFHGLHVIIGSTFLIVCFFRQL) threads the bilayer. The Mitochondrial matrix segment spans residues 224 to 232 (KFHFTSNHH). A helical membrane pass occupies residues 233–256 (FGFEAAAWYWHFVDVVWLFLYVSI). The Mitochondrial intermembrane segment spans residues 257–261 (YWWGS).

It belongs to the cytochrome c oxidase subunit 3 family. In terms of assembly, component of the cytochrome c oxidase (complex IV, CIV), a multisubunit enzyme composed of 14 subunits. The complex is composed of a catalytic core of 3 subunits MT-CO1, MT-CO2 and MT-CO3, encoded in the mitochondrial DNA, and 11 supernumerary subunits COX4I, COX5A, COX5B, COX6A, COX6B, COX6C, COX7A, COX7B, COX7C, COX8 and NDUFA4, which are encoded in the nuclear genome. The complex exists as a monomer or a dimer and forms supercomplexes (SCs) in the inner mitochondrial membrane with NADH-ubiquinone oxidoreductase (complex I, CI) and ubiquinol-cytochrome c oxidoreductase (cytochrome b-c1 complex, complex III, CIII), resulting in different assemblies (supercomplex SCI(1)III(2)IV(1) and megacomplex MCI(2)III(2)IV(2)).

The protein resides in the mitochondrion inner membrane. It carries out the reaction 4 Fe(II)-[cytochrome c] + O2 + 8 H(+)(in) = 4 Fe(III)-[cytochrome c] + 2 H2O + 4 H(+)(out). Its function is as follows. Component of the cytochrome c oxidase, the last enzyme in the mitochondrial electron transport chain which drives oxidative phosphorylation. The respiratory chain contains 3 multisubunit complexes succinate dehydrogenase (complex II, CII), ubiquinol-cytochrome c oxidoreductase (cytochrome b-c1 complex, complex III, CIII) and cytochrome c oxidase (complex IV, CIV), that cooperate to transfer electrons derived from NADH and succinate to molecular oxygen, creating an electrochemical gradient over the inner membrane that drives transmembrane transport and the ATP synthase. Cytochrome c oxidase is the component of the respiratory chain that catalyzes the reduction of oxygen to water. Electrons originating from reduced cytochrome c in the intermembrane space (IMS) are transferred via the dinuclear copper A center (CU(A)) of subunit 2 and heme A of subunit 1 to the active site in subunit 1, a binuclear center (BNC) formed by heme A3 and copper B (CU(B)). The BNC reduces molecular oxygen to 2 water molecules using 4 electrons from cytochrome c in the IMS and 4 protons from the mitochondrial matrix. The protein is Cytochrome c oxidase subunit 3 (MT-CO3) of Gazella cuvieri (Cuvier's gazelle).